The chain runs to 379 residues: Putative 8-amino-7-oxononanoate synthase (379 aa).

Residue arginine 18 participates in substrate binding. 106-107 provides a ligand contact to pyridoxal 5'-phosphate; sequence GY. Histidine 130 contacts substrate. Pyridoxal 5'-phosphate contacts are provided by residues serine 178, 204–207, and 235–238; these read DEAH and TFGK. Lysine 238 carries the post-translational modification N6-(pyridoxal phosphate)lysine. Threonine 351 is a binding site for substrate.

This sequence belongs to the class-II pyridoxal-phosphate-dependent aminotransferase family. BioF subfamily. Homodimer. Pyridoxal 5'-phosphate serves as cofactor.

It carries out the reaction 6-carboxyhexanoyl-[ACP] + L-alanine + H(+) = (8S)-8-amino-7-oxononanoate + holo-[ACP] + CO2. The protein operates within cofactor biosynthesis; biotin biosynthesis. Its function is as follows. Catalyzes the decarboxylative condensation of pimeloyl-[acyl-carrier protein] and L-alanine to produce 8-amino-7-oxononanoate (AON), [acyl-carrier protein], and carbon dioxide. The sequence is that of Putative 8-amino-7-oxononanoate synthase (bioF) from Haemophilus influenzae (strain 86-028NP).